A 391-amino-acid polypeptide reads, in one-letter code: Inactive polyketide synthase 2 (391 aa).

Residue cysteine 164 is part of the active site.

The protein belongs to the thiolase-like superfamily. Chalcone/stilbene synthases family. In terms of assembly, homodimer.

This is Inactive polyketide synthase 2 (PKS2) from Rubus idaeus (Raspberry).